The following is a 265-amino-acid chain: Silencing boundary-establishment protein FUB1-like protein (265 aa).

Positions 194–265 (HPENRSRNEQ…MPPGSSDMFM (72 aa)) are disordered.

This sequence belongs to the proteasome inhibitor PI31 family. In terms of assembly, interacts with the 20S proteasome.

The protein resides in the cytoplasm. It is found in the nucleus. May play a role in the establishment of transcriptional silencing boundaries, preventing the propagation of heterochromatic silencing. This Schizosaccharomyces pombe (strain 972 / ATCC 24843) (Fission yeast) protein is Silencing boundary-establishment protein FUB1-like protein.